A 357-amino-acid chain; its full sequence is MNSKFADELIATAKAIVAPGKGILAADESTNTIGARFKKINLENNEENRRAYRELLIGTGNGVNEFIGGIILYEETLYQKMADGRLFTDVLREQKIHIGIKVDKGVVPIPGTDGETSTQGLDGLAERCKKYYEAGARFAKWRAVLKIDLAKNCPSQLSITENAHTLARYAAICQENGLVPIVEPEILMDGNHTVEQSAEVTEKVLAAVFKALNDHHILLEGALLKPNMVVNGTDCPIKATSEQIGKFTVRTLQRTVPPALTGVVFLSGGQTEIEATANLNAMNVLPNRPWALSFSYGRALQASVISTWKGESANVEAARKVYLHRAKCNSLAQLGKYTGEESTGSASESLYVKDYKY.

Substrate contacts are provided by R49 and K140. Catalysis depends on E183, which acts as the Proton acceptor. Catalysis depends on K225, which acts as the Schiff-base intermediate with dihydroxyacetone-P.

This sequence belongs to the class I fructose-bisphosphate aldolase family.

It carries out the reaction beta-D-fructose 1,6-bisphosphate = D-glyceraldehyde 3-phosphate + dihydroxyacetone phosphate. Its pathway is carbohydrate degradation; glycolysis; D-glyceraldehyde 3-phosphate and glycerone phosphate from D-glucose: step 4/4. This chain is Fructose-bisphosphate aldolase (fba), found in Dictyostelium discoideum (Social amoeba).